We begin with the raw amino-acid sequence, 783 residues long: Rabenosyn-5 (783 aa).

Ala-2 is modified (N-acetylalanine). A Phosphoserine modification is found at Ser-3. A C2H2-type zinc finger spans residues 14 to 37 (FLCPLCLKDLQSFYQLQSHYEEEH). Positions 99–262 (RSHLSDFKKH…HCKDKLLKRE (164 aa)) are necessary for the correct targeting to endosomes. The FYVE-type zinc finger occupies 156–259 (DQDVPFCPDC…CCTHCKDKLL (104 aa)). Cys-162, Cys-165, Cys-178, Cys-181, Cys-186, and Cys-189 together coordinate Zn(2+). Positions 206-223 (KDSLSTHTSPSQSPNSVH) are enriched in polar residues. The segment at 206–240 (KDSLSTHTSPSQSPNSVHGSRRGSISSMSSVSSVL) is disordered. Ser-214, Ser-218, Ser-225, and Ser-229 each carry phosphoserine. A compositionally biased stretch (low complexity) spans 227–239 (RGSISSMSSVSSV). The Zn(2+) site is built by Cys-251 and Cys-254. The necessary for interaction with RAB4A stretch occupies residues 263 to 499 (QQMDEKEHTP…QLQDEYDQQQ (237 aa)). The interval 263 to 783 (QQMDEKEHTP…TLAKQKGAPN (521 aa)) is necessary for interaction with EHD1. Coiled-coil stretches lie at residues 377-412 (TKEQ…KLEE) and 471-531 (QAKA…ELER). Composition is skewed to basic and acidic residues over residues 387–399 (KRKQ…RTVE) and 405–414 (ESRRKLEERQ). The interval 387–433 (KRKQDLEQKRTVERQAALESRRKLEERQSGLASHTANGDVRSLRGIP) is disordered. The UIM domain occupies 495 to 514 (YDQQQTEKAIELSRKQAEEE). 2 disordered regions span residues 569-638 (SYSL…SPTE) and 663-733 (FEED…EEHI). 2 stretches are compositionally biased toward polar residues: residues 571-584 (SLDQ…SSTA) and 610-623 (TLPQ…SDKA). The interval 627–783 (PFDEDDLSSP…TLAKQKGAPN (157 aa)) is necessary for interaction with RAB5A. The segment covering 663–673 (FEEDAEEEEVA) has biased composition (acidic residues). Ser-686 is modified (phosphoserine). Residues 721–733 (VDSDSGMEAEEHI) show a composition bias toward acidic residues.

Interacts with EHD1, RAB4A, RAB5A, RAB22A, RAB24 and VPS45. Binds simultaneously to RAB4A and RAB5A in vitro. Interacts with RAB4A and RAB5A that has been activated by GTP binding.

Its subcellular location is the cell membrane. It is found in the early endosome membrane. Functionally, rab4/Rab5 effector protein acting in early endocytic membrane fusion and membrane trafficking of recycling endosomes. Required for endosome fusion either homotypically or with clathrin coated vesicles. Plays a role in the lysosomal trafficking of CTSD/cathepsin D from the Golgi to lysosomes. Also promotes the recycling of transferrin directly from early endosomes to the plasma membrane. Binds phospholipid vesicles containing phosphatidylinositol 3-phosphate (PtdInsP3). Plays a role in the recycling of transferrin receptor to the plasma membrane. The protein is Rabenosyn-5 of Mus musculus (Mouse).